Consider the following 106-residue polypeptide: Transcriptional and immune response regulator (106 aa).

In terms of assembly, monomer. Interacts with NOTCH2 (via ANK repeats), the interaction inhibits the nuclear translocation of NOTCH2 N2ICD. Interacts (C-terminus) with CBY1 (C-terminus), TCIM competes with CTNNB1 for the interaction with CBY1. As to expression, expressed in liver, expression levels decrease in regenerating liver. In bone marrow, expressed in large progenitor-like cells, cells with ring-shaped nuclei and, at lower, levels in hematopietic stem cell-like cells with round nuclei (at protein level).

Its subcellular location is the cytoplasm. It is found in the nucleus. The protein resides in the nucleolus. The protein localises to the nucleus speckle. Its function is as follows. Seems to be involved in the regulation of cell growth an differentiation, may play different and opposite roles depending on the tissue or cell type. May enhance the WNT-CTNNB1 pathway by relieving antagonistic activity of CBY1. Enhances the proliferation of follicular dendritic cells. Plays a role in the mitogen-activated MAPK2/3 signaling pathway, positively regulates G1-to-S-phase transition of the cell cycle. In endothelial cells, enhances key inflammatory mediators and inflammatory response through the modulation of NF-kappaB transcriptional regulatory activity. Involved in the regulation of heat shock response, seems to play a positive feedback with HSF1 to modulate heat-shock downstream gene expression. Plays a role in the regulation of hematopoiesis even if the mechanisms are unknown. In cancers such as thyroid or lung cancer, it has been described as promoter of cell proliferation, G1-to-S-phase transition and inhibitor of apoptosis. However, it negatively regulates self-renewal of liver cancer cells via suppresion of NOTCH2 signaling. The sequence is that of Transcriptional and immune response regulator from Mus musculus (Mouse).